The chain runs to 701 residues: Epithelial splicing regulatory protein 2 (701 aa).

RRM domains are found at residues 226 to 303 (TVIR…KATG), 327 to 407 (VIIR…RSTA), and 448 to 523 (CVRL…VEVF).

This sequence belongs to the ESRP family.

It is found in the nucleus. MRNA splicing factor that regulates the formation of epithelial cell-specific isoforms. Specifically regulates the expression of FGFR2-IIIb, an epithelial cell-specific isoform of FGFR2. Acts by directly binding specific sequences in mRNAs. Binds the GU-rich sequence motifs in the ISE/ISS-3, a cis-element regulatory region present in the mRNA of FGFR2. The chain is Epithelial splicing regulatory protein 2 (ESRP2) from Gallus gallus (Chicken).